Reading from the N-terminus, the 145-residue chain is Enhancer of mRNA-decapping protein 2 (145 aa).

2 disordered regions span residues 1 to 74 (MGSE…DKAT) and 89 to 115 (PKKK…IDSK). Residues 29–42 (TKTQILVPPTQSLP) are compositionally biased toward polar residues. Residues 55–73 (QRREPRERTSKTGHEDDKA) are compositionally biased toward basic and acidic residues. Residues 89–102 (PKKKSCKYKKKKTR) show a composition bias toward basic residues.

Belongs to the EDC family.

Its subcellular location is the cytoplasm. It is found in the nucleus. Functionally, mRNA-binding protein which stimulates mRNA decapping by DCP1 and DCP2. This Saccharomyces cerevisiae (strain ATCC 204508 / S288c) (Baker's yeast) protein is Enhancer of mRNA-decapping protein 2 (EDC2).